The following is a 263-amino-acid chain: Acyl-[acyl-carrier-protein]--UDP-N-acetylglucosamine O-acyltransferase (263 aa).

Belongs to the transferase hexapeptide repeat family. LpxA subfamily. As to quaternary structure, homotrimer.

The protein resides in the cytoplasm. The enzyme catalyses a (3R)-hydroxyacyl-[ACP] + UDP-N-acetyl-alpha-D-glucosamine = a UDP-3-O-[(3R)-3-hydroxyacyl]-N-acetyl-alpha-D-glucosamine + holo-[ACP]. Its pathway is glycolipid biosynthesis; lipid IV(A) biosynthesis; lipid IV(A) from (3R)-3-hydroxytetradecanoyl-[acyl-carrier-protein] and UDP-N-acetyl-alpha-D-glucosamine: step 1/6. In terms of biological role, involved in the biosynthesis of lipid A, a phosphorylated glycolipid that anchors the lipopolysaccharide to the outer membrane of the cell. The protein is Acyl-[acyl-carrier-protein]--UDP-N-acetylglucosamine O-acyltransferase of Stenotrophomonas maltophilia (strain R551-3).